Consider the following 91-residue polypeptide: Small ribosomal subunit protein uS19 (91 aa).

The protein belongs to the universal ribosomal protein uS19 family.

Functionally, protein S19 forms a complex with S13 that binds strongly to the 16S ribosomal RNA. This Pseudomonas paraeruginosa (strain DSM 24068 / PA7) (Pseudomonas aeruginosa (strain PA7)) protein is Small ribosomal subunit protein uS19.